A 197-amino-acid polypeptide reads, in one-letter code: Probable nicotinate-nucleotide adenylyltransferase (197 aa).

Belongs to the NadD family.

The catalysed reaction is nicotinate beta-D-ribonucleotide + ATP + H(+) = deamido-NAD(+) + diphosphate. The protein operates within cofactor biosynthesis; NAD(+) biosynthesis; deamido-NAD(+) from nicotinate D-ribonucleotide: step 1/1. Functionally, catalyzes the reversible adenylation of nicotinate mononucleotide (NaMN) to nicotinic acid adenine dinucleotide (NaAD). This is Probable nicotinate-nucleotide adenylyltransferase from Thermosipho melanesiensis (strain DSM 12029 / CIP 104789 / BI429).